A 95-amino-acid polypeptide reads, in one-letter code: MRQYELMIILDPSQDERTVAPSLDKFLEVVRKDKGDVVKVDVWGKRRLAYPINKKEEGIYAVIDLKCESATVLELDRVLNLNDGVLRTKVLRLDK.

Belongs to the bacterial ribosomal protein bS6 family.

Functionally, binds together with bS18 to 16S ribosomal RNA. This is Small ribosomal subunit protein bS6 from Corynebacterium efficiens (strain DSM 44549 / YS-314 / AJ 12310 / JCM 11189 / NBRC 100395).